Here is a 206-residue protein sequence, read N- to C-terminus: Charged multivesicular body protein 6 (206 aa).

A lipid anchor (N-myristoyl glycine) is attached at G2. Positions 11–103 (TRVTEQDRAV…AQIEMKVIEG (93 aa)) form a coiled coil. Positions 167–206 (EADLELPEVPGEELPEVPEQEPVREKERVKKKPEREMVAV) are disordered. Positions 168–185 (ADLELPEVPGEELPEVPE) are enriched in acidic residues. Positions 170 to 181 (LELPEVPGEELP) match the Type-2 MIT-interacting motif motif. Residues 187–206 (EPVREKERVKKKPEREMVAV) are compositionally biased toward basic and acidic residues.

It belongs to the SNF7 family. As to quaternary structure, probable core component of the endosomal sorting required for transport complex III (ESCRT-III). ESCRT-III components are thought to multimerize to form a flat lattice on the perimeter membrane of the endosome.

It is found in the endomembrane system. Its subcellular location is the late endosome membrane. Its function is as follows. Probable core component of the endosomal sorting required for transport complex III (ESCRT-III) which is involved in multivesicular bodies (MVBs) formation and sorting of endosomal cargo proteins into MVBs. MVBs contain intraluminal vesicles (ILVs) that are generated by invagination and scission from the limiting membrane of the endosome and mostly are delivered to lysosomes enabling degradation of membrane proteins, such as stimulated growth factor receptors, lysosomal enzymes and lipids. In the ESCRT-III complex, it probably serves as an acceptor for the ESCRT-II complex on endosomal membranes. In Danio rerio (Zebrafish), this protein is Charged multivesicular body protein 6 (chmp6).